We begin with the raw amino-acid sequence, 116 residues long: Protein Rev (116 aa).

Phosphoserine; by host CK2 occurs at positions 5 and 8. The segment at 18–26 is homomultimerization; that stretch reads LIKILYQSN. The interval 26–50 is disordered; that stretch reads NPYPKPNGSRQARRNRRRRWRARQN. A Nuclear localization signal and RNA-binding (RRE) motif is present at residues 34-50; it reads SRQARRNRRRRWRARQN. The segment covering 36–47 has biased composition (basic residues); that stretch reads QARRNRRRRWRA. The Nuclear export signal and binding to XPO1 motif lies at 73 to 84; that stretch reads LQLPPIERLRLD. The tract at residues 91–116 is disordered; that stretch reads NSGTQGVGDPQISGEPCMVLGAGTKE. Ser-92 bears the Phosphoserine; by host mark.

It belongs to the HIV-1 REV protein family. In terms of assembly, homomultimer; when bound to the RRE. Multimeric assembly is essential for activity and may involve XPO1. Binds to human KPNB1, XPO1, TNPO1, RANBP5 and IPO7. Interacts with the viral Integrase. Interacts with human KHDRBS1. Interacts with human NAP1; this interaction decreases Rev multimerization and stimulates its activity. Interacts with human DEAD-box helicases DDX3 and DDX24; these interactions may serve for viral RNA export to the cytoplasm and packaging, respectively. Interacts with human PSIP1; this interaction may inhibit HIV-1 DNA integration by promoting dissociation of the Integrase-LEDGF/p75 complex. In terms of processing, asymmetrically arginine dimethylated at one site by host PRMT6. Methylation impairs the RNA-binding activity and export of viral RNA from the nucleus to the cytoplasm. Post-translationally, phosphorylated by protein kinase CK2. Presence of, and maybe binding to the N-terminus of the regulatory beta subunit of CK2 is necessary for CK2-mediated Rev's phosphorylation.

It localises to the host nucleus. Its subcellular location is the host nucleolus. It is found in the host cytoplasm. Escorts unspliced or incompletely spliced viral pre-mRNAs (late transcripts) out of the nucleus of infected cells. These pre-mRNAs carry a recognition sequence called Rev responsive element (RRE) located in the env gene, that is not present in fully spliced viral mRNAs (early transcripts). This function is essential since most viral proteins are translated from unspliced or partially spliced pre-mRNAs which cannot exit the nucleus by the pathway used by fully processed cellular mRNAs. Rev itself is translated from a fully spliced mRNA that readily exits the nucleus. Rev's nuclear localization signal (NLS) binds directly to KPNB1/Importin beta-1 without previous binding to KPNA1/Importin alpha-1. KPNB1 binds to the GDP bound form of RAN (Ran-GDP) and targets Rev to the nucleus. In the nucleus, the conversion from Ran-GDP to Ran-GTP dissociates Rev from KPNB1 and allows Rev's binding to the RRE in viral pre-mRNAs. Rev multimerization on the RRE via cooperative assembly exposes its nuclear export signal (NES) to the surface. Rev can then form a complex with XPO1/CRM1 and Ran-GTP, leading to nuclear export of the complex. Conversion from Ran-GTP to Ran-GDP mediates dissociation of the Rev/RRE/XPO1/RAN complex, so that Rev can return to the nucleus for a subsequent round of export. Beside KPNB1, also seems to interact with TNPO1/Transportin-1, RANBP5/IPO5 and IPO7/RANBP7 for nuclear import. The nucleoporin-like HRB/RIP is an essential cofactor that probably indirectly interacts with Rev to release HIV RNAs from the perinuclear region to the cytoplasm. This Homo sapiens (Human) protein is Protein Rev.